Reading from the N-terminus, the 151-residue chain is UPF0208 membrane protein CKO_00500 (151 aa).

Transmembrane regions (helical) follow at residues 46–65 and 69–91; these read YAIRFMPPIAVFTLCWQIAL and LGPAVATALFALSLPMQGMWWLG.

Belongs to the UPF0208 family.

Its subcellular location is the cell inner membrane. This chain is UPF0208 membrane protein CKO_00500, found in Citrobacter koseri (strain ATCC BAA-895 / CDC 4225-83 / SGSC4696).